Consider the following 183-residue polypeptide: Mitochondrial import receptor subunit TOM20 (183 aa).

The Mitochondrial intermembrane segment spans residues 1-8 (MSQSNPIL). A helical transmembrane segment spans residues 9-28 (RGLAITTAIAALSATGYAIY). Topologically, residues 29 to 183 (FDYQRRNSPQ…AVAEANDIDD (155 aa)) are cytoplasmic. Position 172 is a phosphoserine (Ser172).

Belongs to the Tom20 family. As to quaternary structure, forms part of the preprotein translocase complex of the outer mitochondrial membrane (TOM complex) which consists of at least 7 different proteins (TOM5, TOM6, TOM7, TOM20, TOM22, TOM40 and TOM70). In the complex, interacts with TOM22.

The protein resides in the mitochondrion outer membrane. In terms of biological role, central component of the TOM (translocase of outer membrane) receptor complex responsible for the recognition and translocation of cytosolically synthesized mitochondrial preproteins. Together with TOM22 functions as the transit peptide receptor at the surface of the mitochondrion outer membrane and facilitates the movement of preproteins into the TOM40 translocation pore. The protein is Mitochondrial import receptor subunit TOM20 (TOM20) of Saccharomyces cerevisiae (strain ATCC 204508 / S288c) (Baker's yeast).